Here is a 337-residue protein sequence, read N- to C-terminus: Transaldolase (337 aa).

The Nuclear localization signal signature appears at 1 to 10 (MSGSPVKRQR). At lysine 115 the chain carries N6-acetyllysine. Lysine 142 functions as the Schiff-base intermediate with substrate in the catalytic mechanism. N6-acetyllysine is present on lysine 219. Serine 237 and serine 256 each carry phosphoserine. 3 positions are modified to N6-acetyllysine: lysine 269, lysine 286, and lysine 321.

It belongs to the transaldolase family. Type 1 subfamily. As to quaternary structure, homodimer. Interacts with KPNA1 and KPNA4.

It localises to the nucleus. It is found in the cytoplasm. The catalysed reaction is D-sedoheptulose 7-phosphate + D-glyceraldehyde 3-phosphate = D-erythrose 4-phosphate + beta-D-fructose 6-phosphate. Its pathway is carbohydrate degradation; pentose phosphate pathway; D-glyceraldehyde 3-phosphate and beta-D-fructose 6-phosphate from D-ribose 5-phosphate and D-xylulose 5-phosphate (non-oxidative stage): step 2/3. Its function is as follows. Catalyzes the rate-limiting step of the non-oxidative phase in the pentose phosphate pathway. Catalyzes the reversible conversion of sedheptulose-7-phosphate and D-glyceraldehyde 3-phosphate into erythrose-4-phosphate and beta-D-fructose 6-phosphate. This chain is Transaldolase (TALDO1), found in Cricetulus griseus (Chinese hamster).